A 282-amino-acid polypeptide reads, in one-letter code: Pantothenate synthetase (282 aa).

26 to 33 serves as a coordination point for ATP; sequence MGNLHEGH. His-33 (proton donor) is an active-site residue. Gln-57 provides a ligand contact to (R)-pantoate. Gln-57 provides a ligand contact to beta-alanine. Position 144-147 (144-147) interacts with ATP; that stretch reads GQKD. Residue Gln-150 coordinates (R)-pantoate. ATP-binding positions include Leu-173 and 181–184; that span reads LSSR.

The protein belongs to the pantothenate synthetase family. In terms of assembly, homodimer.

It localises to the cytoplasm. It catalyses the reaction (R)-pantoate + beta-alanine + ATP = (R)-pantothenate + AMP + diphosphate + H(+). Its pathway is cofactor biosynthesis; (R)-pantothenate biosynthesis; (R)-pantothenate from (R)-pantoate and beta-alanine: step 1/1. Functionally, catalyzes the condensation of pantoate with beta-alanine in an ATP-dependent reaction via a pantoyl-adenylate intermediate. The polypeptide is Pantothenate synthetase (Albidiferax ferrireducens (strain ATCC BAA-621 / DSM 15236 / T118) (Rhodoferax ferrireducens)).